The primary structure comprises 159 residues: Phosphopantetheine adenylyltransferase (159 aa).

T10 serves as a coordination point for substrate. ATP contacts are provided by residues 10–11 and H18; that span reads TF. Substrate-binding residues include K42, L74, and R88. ATP contacts are provided by residues 89 to 91, E99, and 124 to 130; these read GLR and YAFISSS.

It belongs to the bacterial CoaD family. As to quaternary structure, homohexamer. Requires Mg(2+) as cofactor.

It localises to the cytoplasm. The enzyme catalyses (R)-4'-phosphopantetheine + ATP + H(+) = 3'-dephospho-CoA + diphosphate. The protein operates within cofactor biosynthesis; coenzyme A biosynthesis; CoA from (R)-pantothenate: step 4/5. Reversibly transfers an adenylyl group from ATP to 4'-phosphopantetheine, yielding dephospho-CoA (dPCoA) and pyrophosphate. This is Phosphopantetheine adenylyltransferase from Hydrogenovibrio crunogenus (strain DSM 25203 / XCL-2) (Thiomicrospira crunogena).